Consider the following 317-residue polypeptide: Ribosomal protein L11 methyltransferase (317 aa).

S-adenosyl-L-methionine-binding residues include threonine 158, glycine 179, aspartate 201, and asparagine 244.

This sequence belongs to the methyltransferase superfamily. PrmA family.

The protein localises to the cytoplasm. The catalysed reaction is L-lysyl-[protein] + 3 S-adenosyl-L-methionine = N(6),N(6),N(6)-trimethyl-L-lysyl-[protein] + 3 S-adenosyl-L-homocysteine + 3 H(+). In terms of biological role, methylates ribosomal protein L11. This is Ribosomal protein L11 methyltransferase from Streptococcus agalactiae serotype Ia (strain ATCC 27591 / A909 / CDC SS700).